We begin with the raw amino-acid sequence, 292 residues long: uncharacterized protein (292 aa).

Residues 1 to 59 form the HTH lysR-type domain; it reads MTITQLKVFVKIAETGSFTKAGQALNMTQPAVSHAISAIEAELDVKLIIRDRRNGLMLT. Residues 18–37 constitute a DNA-binding region (H-T-H motif); that stretch reads FTKAGQALNMTQPAVSHAIS.

This sequence belongs to the LysR transcriptional regulatory family.

This is an uncharacterized protein from Bacillus subtilis (strain 168).